The primary structure comprises 502 residues: C2H2-type transcription factor MSN2 (502 aa).

2 C2H2-type zinc fingers span residues F385 to H408 and F414 to H436.

The protein resides in the nucleus. In terms of biological role, key downstream transcription factor in the HOG1-MAPK pathway. Plays crucial roles in the regulation of growth, conidiation, trap development and fatty acid metabolism. Negatively regulates secondary metabolism such as arthrobotrisins biosynthesis.Also regulates autophagy and endocytosis. The protein is C2H2-type transcription factor MSN2 of Arthrobotrys oligospora (strain ATCC 24927 / CBS 115.81 / DSM 1491) (Nematode-trapping fungus).